We begin with the raw amino-acid sequence, 211 residues long: Pyridoxine/pyridoxamine 5'-phosphate oxidase (211 aa).

Residues 8–11 (RRDY) and Lys66 contribute to the substrate site. Residues 61 to 66 (RLVLLK), 76 to 77 (FT), Arg82, Lys83, and Gln105 contribute to the FMN site. Substrate is bound by residues Tyr123, Arg127, and Ser131. FMN contacts are provided by residues 140 to 141 (QS) and Trp184. 190–192 (RLH) is a binding site for substrate. Arg194 is a binding site for FMN.

The protein belongs to the pyridoxamine 5'-phosphate oxidase family. In terms of assembly, homodimer. FMN is required as a cofactor.

It catalyses the reaction pyridoxamine 5'-phosphate + O2 + H2O = pyridoxal 5'-phosphate + H2O2 + NH4(+). The catalysed reaction is pyridoxine 5'-phosphate + O2 = pyridoxal 5'-phosphate + H2O2. It participates in cofactor metabolism; pyridoxal 5'-phosphate salvage; pyridoxal 5'-phosphate from pyridoxamine 5'-phosphate: step 1/1. Its pathway is cofactor metabolism; pyridoxal 5'-phosphate salvage; pyridoxal 5'-phosphate from pyridoxine 5'-phosphate: step 1/1. In terms of biological role, catalyzes the oxidation of either pyridoxine 5'-phosphate (PNP) or pyridoxamine 5'-phosphate (PMP) into pyridoxal 5'-phosphate (PLP). This is Pyridoxine/pyridoxamine 5'-phosphate oxidase from Thermosynechococcus vestitus (strain NIES-2133 / IAM M-273 / BP-1).